The chain runs to 289 residues: Delta-sarcoglycan (289 aa).

Over 1 to 35 (MPQEQYTHHRSTMPGSVGPQVYKVGIYGWRKRCLY) the chain is Cytoplasmic. Residues 36–56 (FFVLLLMILILVNLAMTIWIL) traverse the membrane as a helical; Signal-anchor for type II membrane protein segment. Residues 57 to 289 (KVMNFTIDGM…TCQINTSVCL (233 aa)) are Extracellular-facing. Residues Asn-60 and Asn-108 are each glycosylated (N-linked (GlcNAc...) asparagine). Intrachain disulfides connect Cys-263/Cys-288 and Cys-265/Cys-281. N-linked (GlcNAc...) asparagine glycosylation is present at Asn-284.

Belongs to the sarcoglycan beta/delta/gamma/zeta family. Interacts with FLNC and DAG1. Cross-link to form 2 major subcomplexes: one consisting of SGCB, SGCD and SGCG and the other consisting of SGCB and SGCD. The association between SGCB and SGCG is particularly strong while SGCA is loosely associated with the other sarcoglycans. Post-translationally, glycosylated. Disulfide bonds are present. In terms of tissue distribution, most strongly expressed in skeletal and cardiac muscle. Also detected in smooth muscle. Weak expression in brain and lung.

Its subcellular location is the cell membrane. The protein resides in the sarcolemma. The protein localises to the cytoplasm. It is found in the cytoskeleton. Functionally, component of the sarcoglycan complex, a subcomplex of the dystrophin-glycoprotein complex which forms a link between the F-actin cytoskeleton and the extracellular matrix. The polypeptide is Delta-sarcoglycan (SGCD) (Homo sapiens (Human)).